We begin with the raw amino-acid sequence, 495 residues long: Maternal protein exuperantia-1 (495 aa).

Disordered regions lie at residues 197–217 and 377–495; these read DESA…SSND and TIKP…AATN. 2 stretches are compositionally biased toward polar residues: residues 207-216 and 398-414; these read ENVNRNGSSN and AASS…TSTE.

Functionally, ensures the proper localization of the mRNA of the bicoid gene to the anterior regions of the oocyte thus playing a fundamental role in the establishment of the polarity of the oocyte. May bind the bcd mRNA. The protein is Maternal protein exuperantia-1 (exu1) of Drosophila pseudoobscura pseudoobscura (Fruit fly).